The sequence spans 146 residues: Anti-sigma F factor (146 aa).

The protein belongs to the anti-sigma-factor family.

The enzyme catalyses L-seryl-[protein] + ATP = O-phospho-L-seryl-[protein] + ADP + H(+). It catalyses the reaction L-threonyl-[protein] + ATP = O-phospho-L-threonyl-[protein] + ADP + H(+). Binds to sigma F and blocks its ability to form an RNA polymerase holoenzyme (E-sigma F). Phosphorylates SpoIIAA on a serine residue. This phosphorylation may enable SpoIIAA to act as an anti-anti-sigma factor that counteracts SpoIIAB and thus releases sigma F from inhibition. The sequence is that of Anti-sigma F factor from Bacillus cereus (strain G9842).